The following is a 259-amino-acid chain: tRNA pseudouridine synthase A (259 aa).

Residue D52 is the Nucleophile of the active site. Position 111 (Y111) interacts with substrate.

Belongs to the tRNA pseudouridine synthase TruA family. As to quaternary structure, homodimer.

The catalysed reaction is uridine(38/39/40) in tRNA = pseudouridine(38/39/40) in tRNA. Functionally, formation of pseudouridine at positions 38, 39 and 40 in the anticodon stem and loop of transfer RNAs. The sequence is that of tRNA pseudouridine synthase A from Ruegeria sp. (strain TM1040) (Silicibacter sp.).